The following is a 160-amino-acid chain: 2-C-methyl-D-erythritol 2,4-cyclodiphosphate synthase (160 aa).

2 residues coordinate a divalent metal cation: D12 and H14. 4-CDP-2-C-methyl-D-erythritol 2-phosphate is bound by residues 12-14 (DVH) and 38-39 (HS). Residue H46 participates in a divalent metal cation binding. 4-CDP-2-C-methyl-D-erythritol 2-phosphate contacts are provided by residues 60–62 (DIG), 65–69 (FPDTD), 136–139 (TTTE), F143, and R146.

This sequence belongs to the IspF family. Homotrimer. Requires a divalent metal cation as cofactor.

It catalyses the reaction 4-CDP-2-C-methyl-D-erythritol 2-phosphate = 2-C-methyl-D-erythritol 2,4-cyclic diphosphate + CMP. The protein operates within isoprenoid biosynthesis; isopentenyl diphosphate biosynthesis via DXP pathway; isopentenyl diphosphate from 1-deoxy-D-xylulose 5-phosphate: step 4/6. Functionally, involved in the biosynthesis of isopentenyl diphosphate (IPP) and dimethylallyl diphosphate (DMAPP), two major building blocks of isoprenoid compounds. Catalyzes the conversion of 4-diphosphocytidyl-2-C-methyl-D-erythritol 2-phosphate (CDP-ME2P) to 2-C-methyl-D-erythritol 2,4-cyclodiphosphate (ME-CPP) with a corresponding release of cytidine 5-monophosphate (CMP). This is 2-C-methyl-D-erythritol 2,4-cyclodiphosphate synthase from Acinetobacter baumannii (strain SDF).